We begin with the raw amino-acid sequence, 537 residues long: Chaperonin GroEL 1 (537 aa).

ATP is bound by residues threonine 29–proline 32, aspartate 86–threonine 90, glycine 413, asparagine 478–alanine 480, and aspartate 494.

Belongs to the chaperonin (HSP60) family. In terms of assembly, forms a cylinder of 14 subunits composed of two heptameric rings stacked back-to-back. Interacts with the co-chaperonin GroES.

It is found in the cytoplasm. The enzyme catalyses ATP + H2O + a folded polypeptide = ADP + phosphate + an unfolded polypeptide.. Functionally, together with its co-chaperonin GroES, plays an essential role in assisting protein folding. The GroEL-GroES system forms a nano-cage that allows encapsulation of the non-native substrate proteins and provides a physical environment optimized to promote and accelerate protein folding. The chain is Chaperonin GroEL 1 from Corynebacterium efficiens (strain DSM 44549 / YS-314 / AJ 12310 / JCM 11189 / NBRC 100395).